Consider the following 118-residue polypeptide: Large ribosomal subunit protein bL17 (118 aa).

The protein belongs to the bacterial ribosomal protein bL17 family. In terms of assembly, part of the 50S ribosomal subunit. Contacts protein L32.

The polypeptide is Large ribosomal subunit protein bL17 (Aster yellows witches'-broom phytoplasma (strain AYWB)).